A 376-amino-acid polypeptide reads, in one-letter code: E3 ubiquitin-protein ligase RNF133 (376 aa).

The region spanning 65-167 (SSTLKRVAGV…LKGTEIFHLI (103 aa)) is the PA domain. The chain crosses the membrane as a helical span at residues 190 to 210 (YLVSFVIVTTATLAYFIFYHI). The RING-type; atypical zinc finger occupies 256 to 297 (CVICFERYKPNDIVRILTCKHFFHKNCIDPWILPHGTCPICK). The segment at 327 to 376 (ETLSPSEEETNNEVSPAGTSDKVIHVEENPTSQNNDIQPHSVVEDVHPSP) is disordered. Residues 355-364 (NPTSQNNDIQ) are compositionally biased toward polar residues.

As to quaternary structure, interacts with E3 ligase UBE2J1. Auto-ubiquitinated. Expression is testis-specific.

The protein resides in the endoplasmic reticulum membrane. It catalyses the reaction S-ubiquitinyl-[E2 ubiquitin-conjugating enzyme]-L-cysteine + [acceptor protein]-L-lysine = [E2 ubiquitin-conjugating enzyme]-L-cysteine + N(6)-ubiquitinyl-[acceptor protein]-L-lysine.. The protein operates within protein modification; protein ubiquitination. Functionally, has E3 ubiquitin-protein ligase activity. Plays a role in male fecundity through the interaction with the E2 ubituitin-protein ligase UBE2J1. This chain is E3 ubiquitin-protein ligase RNF133, found in Homo sapiens (Human).